The chain runs to 319 residues: uncharacterized protein (319 aa).

Positions 1–27 (MYKKFVPFAVFLFLFFVSFEMMENPHA) are cleaved as a signal peptide. In terms of domain architecture, NodB homology spans 130 to 306 (PMVAFLINVA…QIKDKGYALG (177 aa)).

Belongs to the polysaccharide deacetylase family.

This is an uncharacterized protein from Bacillus subtilis (strain 168).